Reading from the N-terminus, the 408-residue chain is MKFFDEARIEVVAGDGGNGAATFRREKFIPRGGPDGGDGGRGGSVYAVADRNLNTLVEYRFKRSFRAERGENGGSKDCYGKGGEDITLHFPVGTVISDLDSGEPIADLDVDGKRVLLAQGGRGGLGNLHFKSSVNRAPRKRTMGQEGERRNLHLELKVLADVGLLGMPNAGKSTFIRAVSAARPKVGDYPFTTLQPNLGVVRTDENRSFVIADIPGLIEGAAEGAGLGHQFLRHLQRTHVLLHLVDLAPFDPEVDPVRDALAIVEELRKYDESLYNKPRWLVLNKLDLLEPEDRAPRVAAFLEAYGEVERHFEISALQGEGCRGLIFALQDFLDSERANIHAQQAAREAEERQRLAAAQSARSAAEAEALEADLAEDALAEDALAEDALAEDALDDDADGEDADPNAR.

An Obg domain is found at 1–159 (MKFFDEARIE…RNLHLELKVL (159 aa)). The OBG-type G domain maps to 160-334 (ADVGLLGMPN…LIFALQDFLD (175 aa)). GTP is bound by residues 166–173 (GMPNAGKS), 191–195 (FTTLQ), 213–216 (DIPG), 284–287 (NKLD), and 315–317 (SAL). Mg(2+)-binding residues include serine 173 and threonine 193. The interval 385-408 (AEDALAEDALDDDADGEDADPNAR) is disordered.

The protein belongs to the TRAFAC class OBG-HflX-like GTPase superfamily. OBG GTPase family. Monomer. Mg(2+) serves as cofactor.

Its subcellular location is the cytoplasm. Its function is as follows. An essential GTPase which binds GTP, GDP and possibly (p)ppGpp with moderate affinity, with high nucleotide exchange rates and a fairly low GTP hydrolysis rate. Plays a role in control of the cell cycle, stress response, ribosome biogenesis and in those bacteria that undergo differentiation, in morphogenesis control. This is GTPase Obg from Azoarcus sp. (strain BH72).